The following is a 330-amino-acid chain: tRNA U34 carboxymethyltransferase (330 aa).

Carboxy-S-adenosyl-L-methionine contacts are provided by residues Lys-91, Trp-105, Lys-110, Gly-130, 152 to 154 (DPS), 181 to 182 (IE), Met-196, Tyr-200, and Arg-315.

Belongs to the class I-like SAM-binding methyltransferase superfamily. CmoB family. Homotetramer.

It carries out the reaction carboxy-S-adenosyl-L-methionine + 5-hydroxyuridine(34) in tRNA = 5-carboxymethoxyuridine(34) in tRNA + S-adenosyl-L-homocysteine + H(+). Catalyzes carboxymethyl transfer from carboxy-S-adenosyl-L-methionine (Cx-SAM) to 5-hydroxyuridine (ho5U) to form 5-carboxymethoxyuridine (cmo5U) at position 34 in tRNAs. The polypeptide is tRNA U34 carboxymethyltransferase (Shewanella amazonensis (strain ATCC BAA-1098 / SB2B)).